The sequence spans 1401 residues: DNA-directed RNA polymerase subunit beta' (1401 aa).

Positions 71, 73, 86, and 89 each coordinate Zn(2+). Residues Asp-462, Asp-464, and Asp-466 each coordinate Mg(2+). Positions 810, 884, 891, and 894 each coordinate Zn(2+). The segment at 1377 to 1401 (RRKGTGAESATPMLADMANDPAAAE) is disordered.

The protein belongs to the RNA polymerase beta' chain family. In terms of assembly, the RNAP catalytic core consists of 2 alpha, 1 beta, 1 beta' and 1 omega subunit. When a sigma factor is associated with the core the holoenzyme is formed, which can initiate transcription. The cofactor is Mg(2+). Zn(2+) is required as a cofactor.

The enzyme catalyses RNA(n) + a ribonucleoside 5'-triphosphate = RNA(n+1) + diphosphate. DNA-dependent RNA polymerase catalyzes the transcription of DNA into RNA using the four ribonucleoside triphosphates as substrates. This chain is DNA-directed RNA polymerase subunit beta', found in Rhizobium meliloti (strain 1021) (Ensifer meliloti).